The primary structure comprises 430 residues: Adenylosuccinate synthetase (430 aa).

GTP contacts are provided by residues 12-18 (GDEGKGK) and 40-42 (GHT). Catalysis depends on D13, which acts as the Proton acceptor. Positions 13 and 40 each coordinate Mg(2+). IMP is bound by residues 13-16 (DEGK), 38-41 (NAGH), T130, R144, Q224, T239, and R303. H41 functions as the Proton donor in the catalytic mechanism. Substrate is bound at residue 299–305 (VNTGRKR). Residues R305, 331–333 (KLD), and 413–415 (STS) contribute to the GTP site.

The protein belongs to the adenylosuccinate synthetase family. Homodimer. The cofactor is Mg(2+).

It localises to the cytoplasm. The enzyme catalyses IMP + L-aspartate + GTP = N(6)-(1,2-dicarboxyethyl)-AMP + GDP + phosphate + 2 H(+). It functions in the pathway purine metabolism; AMP biosynthesis via de novo pathway; AMP from IMP: step 1/2. Its function is as follows. Plays an important role in the de novo pathway of purine nucleotide biosynthesis. Catalyzes the first committed step in the biosynthesis of AMP from IMP. This Nitrobacter hamburgensis (strain DSM 10229 / NCIMB 13809 / X14) protein is Adenylosuccinate synthetase.